Here is a 208-residue protein sequence, read N- to C-terminus: Outer-membrane lipoprotein carrier protein (208 aa).

An N-terminal signal peptide occupies residues 1 to 21 (MRLIRTLFVAALAMGASLAHA).

Belongs to the LolA family. As to quaternary structure, monomer.

Its subcellular location is the periplasm. In terms of biological role, participates in the translocation of lipoproteins from the inner membrane to the outer membrane. Only forms a complex with a lipoprotein if the residue after the N-terminal Cys is not an aspartate (The Asp acts as a targeting signal to indicate that the lipoprotein should stay in the inner membrane). This chain is Outer-membrane lipoprotein carrier protein, found in Pseudomonas aeruginosa (strain UCBPP-PA14).